We begin with the raw amino-acid sequence, 188 residues long: Elongation factor P (188 aa).

Position 34 is an N6-(3,6-diaminohexanoyl)-5-hydroxylysine (Lys-34).

Belongs to the elongation factor P family. May be beta-lysylated on the epsilon-amino group of Lys-34 by the combined action of EpmA and EpmB, and then hydroxylated on the C5 position of the same residue by EpmC (if this protein is present). Lysylation is critical for the stimulatory effect of EF-P on peptide-bond formation. The lysylation moiety may extend toward the peptidyltransferase center and stabilize the terminal 3-CCA end of the tRNA. Hydroxylation of the C5 position on Lys-34 may allow additional potential stabilizing hydrogen-bond interactions with the P-tRNA.

The protein resides in the cytoplasm. The protein operates within protein biosynthesis; polypeptide chain elongation. In terms of biological role, involved in peptide bond synthesis. Alleviates ribosome stalling that occurs when 3 or more consecutive Pro residues or the sequence PPG is present in a protein, possibly by augmenting the peptidyl transferase activity of the ribosome. Modification of Lys-34 is required for alleviation. This is Elongation factor P from Vibrio atlanticus (strain LGP32) (Vibrio splendidus (strain Mel32)).